An 88-amino-acid polypeptide reads, in one-letter code: Small ribosomal subunit protein uS15 (88 aa).

The protein belongs to the universal ribosomal protein uS15 family. As to quaternary structure, part of the 30S ribosomal subunit. Forms a bridge to the 50S subunit in the 70S ribosome, contacting the 23S rRNA.

Its function is as follows. One of the primary rRNA binding proteins, it binds directly to 16S rRNA where it helps nucleate assembly of the platform of the 30S subunit by binding and bridging several RNA helices of the 16S rRNA. Forms an intersubunit bridge (bridge B4) with the 23S rRNA of the 50S subunit in the ribosome. The chain is Small ribosomal subunit protein uS15 from Polaromonas naphthalenivorans (strain CJ2).